Consider the following 500-residue polypeptide: Protein nucleotidyltransferase YdiU (500 aa).

Residues glycine 96, glycine 98, arginine 99, lysine 119, aspartate 131, glycine 132, arginine 182, and arginine 189 each contribute to the ATP site. Aspartate 258 functions as the Proton acceptor in the catalytic mechanism. Asparagine 259 and aspartate 268 together coordinate Mg(2+). Residue aspartate 268 participates in ATP binding.

It belongs to the SELO family. Mg(2+) is required as a cofactor. Requires Mn(2+) as cofactor.

It carries out the reaction L-seryl-[protein] + ATP = 3-O-(5'-adenylyl)-L-seryl-[protein] + diphosphate. The catalysed reaction is L-threonyl-[protein] + ATP = 3-O-(5'-adenylyl)-L-threonyl-[protein] + diphosphate. It catalyses the reaction L-tyrosyl-[protein] + ATP = O-(5'-adenylyl)-L-tyrosyl-[protein] + diphosphate. The enzyme catalyses L-histidyl-[protein] + UTP = N(tele)-(5'-uridylyl)-L-histidyl-[protein] + diphosphate. It carries out the reaction L-seryl-[protein] + UTP = O-(5'-uridylyl)-L-seryl-[protein] + diphosphate. The catalysed reaction is L-tyrosyl-[protein] + UTP = O-(5'-uridylyl)-L-tyrosyl-[protein] + diphosphate. Its function is as follows. Nucleotidyltransferase involved in the post-translational modification of proteins. It can catalyze the addition of adenosine monophosphate (AMP) or uridine monophosphate (UMP) to a protein, resulting in modifications known as AMPylation and UMPylation. The sequence is that of Protein nucleotidyltransferase YdiU from Rhizobium johnstonii (strain DSM 114642 / LMG 32736 / 3841) (Rhizobium leguminosarum bv. viciae).